The primary structure comprises 443 residues: Chromosome partition protein MukF (443 aa).

Positions 209 to 237 (LDETSGNLRELQDTLNAAGDKLQAQLLRI) are leucine-zipper.

It belongs to the MukF family. In terms of assembly, interacts, and probably forms a ternary complex, with MukE and MukB via its C-terminal region. The complex formation is stimulated by calcium or magnesium. It is required for an interaction between MukE and MukB.

The protein resides in the cytoplasm. Its subcellular location is the nucleoid. Functionally, involved in chromosome condensation, segregation and cell cycle progression. May participate in facilitating chromosome segregation by condensation DNA from both sides of a centrally located replisome during cell division. Not required for mini-F plasmid partitioning. Probably acts via its interaction with MukB and MukE. Overexpression results in anucleate cells. It has a calcium binding activity. This is Chromosome partition protein MukF from Actinobacillus pleuropneumoniae serotype 7 (strain AP76).